Consider the following 1620-residue polypeptide: Probable serine/threonine-protein kinase gdt4 (1620 aa).

Residues 1 to 19 form the signal peptide; sequence MKLEQRIFFLICLVINSFS. Over 20-891 the chain is Extracellular; that stretch reads NCSLLVAPDG…EVIGINEQLN (872 aa). Residues 892-912 traverse the membrane as a helical segment; the sequence is ILAIVLPITISLFAAASILAG. Residues 913-1620 are Cytoplasmic-facing; that stretch reads YLVIKKYKKP…AKRNKKNQNQ (708 aa). The Protein kinase domain maps to 1349 to 1604; it reads IVLEKYLSEG…TLIDLLEKLL (256 aa). ATP is bound by residues 1355-1363 and Lys-1376; that span reads LSEGSFGVV. Catalysis depends on Asp-1466, which acts as the Proton acceptor.

This sequence in the N-terminal section; belongs to the GDT family. It in the C-terminal section; belongs to the protein kinase superfamily. TKL Ser/Thr protein kinase family.

It is found in the membrane. It carries out the reaction L-seryl-[protein] + ATP = O-phospho-L-seryl-[protein] + ADP + H(+). The enzyme catalyses L-threonyl-[protein] + ATP = O-phospho-L-threonyl-[protein] + ADP + H(+). The chain is Probable serine/threonine-protein kinase gdt4 (gdt4) from Dictyostelium discoideum (Social amoeba).